A 251-amino-acid polypeptide reads, in one-letter code: Auxin-responsive protein IAA29 (251 aa).

An EAR-like (transcriptional repression) motif is present at residues Leu-3–Leu-7. The PB1 domain occupies Ser-159–Tyr-246.

This sequence belongs to the Aux/IAA family. Homodimers and heterodimers.

It localises to the nucleus. In terms of biological role, aux/IAA proteins are short-lived transcriptional factors that function as repressors of early auxin response genes at low auxin concentrations. Repression is thought to result from the interaction with auxin response factors (ARFs), proteins that bind to the auxin-responsive promoter element (AuxRE). Formation of heterodimers with ARF proteins may alter their ability to modulate early auxin response genes expression. The chain is Auxin-responsive protein IAA29 (IAA29) from Arabidopsis thaliana (Mouse-ear cress).